We begin with the raw amino-acid sequence, 65 residues long: Large ribosomal subunit protein bL35 (65 aa).

Basic residues predominate over residues 1–16 (MPKMKTHRASAKRFKK). Positions 1–24 (MPKMKTHRASAKRFKKTANGGLKS) are disordered.

It belongs to the bacterial ribosomal protein bL35 family.

This Leuconostoc mesenteroides subsp. mesenteroides (strain ATCC 8293 / DSM 20343 / BCRC 11652 / CCM 1803 / JCM 6124 / NCDO 523 / NBRC 100496 / NCIMB 8023 / NCTC 12954 / NRRL B-1118 / 37Y) protein is Large ribosomal subunit protein bL35.